A 550-amino-acid chain; its full sequence is Calcyphosin-2 (550 aa).

2 disordered regions span residues methionine 1–serine 20 and isoleucine 175–arginine 198. Positions aspartate 181–serine 190 are enriched in polar residues. EF-hand domains follow at residues arginine 379 to glutamate 414, valine 415 to glutamate 452, and tyrosine 453 to proline 488. The Ca(2+) site is built by aspartate 466, asparagine 468, threonine 470, and aspartate 477.

This chain is Calcyphosin-2 (Caps2), found in Mus musculus (Mouse).